Here is a 214-residue protein sequence, read N- to C-terminus: uncharacterized protein (214 aa).

A helical transmembrane segment spans residues 9 to 31 (FLYFAISVLVNLLFLKILYIYLF). The segment at 53-74 (APPKKPGKPQKKVVKKKPEAVS) is disordered. The segment covering 54-67 (PPKKPGKPQKKVVK) has biased composition (basic residues).

The protein resides in the membrane. This is an uncharacterized protein from Aquifex aeolicus (strain VF5).